The chain runs to 373 residues: NAD(P)H-quinone oxidoreductase subunit 1 (373 aa).

The next 9 membrane-spanning stretches (helical) occupy residues 29–49 (LWVP…VMVM), 64–84 (IGPN…GIKL), 98–118 (VLFT…YLVV), 129–149 (IAIG…GLLM), 177–197 (LALS…VGIV), 202–222 (GLGI…IFLI), 267–287 (LLAS…VVPV), 309–329 (VLGI…AILL), and 348–368 (FLLP…LAFP).

Belongs to the complex I subunit 1 family. In terms of assembly, NDH-1 is composed of at least 11 different subunits.

Its subcellular location is the cellular thylakoid membrane. It carries out the reaction a plastoquinone + NADH + (n+1) H(+)(in) = a plastoquinol + NAD(+) + n H(+)(out). It catalyses the reaction a plastoquinone + NADPH + (n+1) H(+)(in) = a plastoquinol + NADP(+) + n H(+)(out). Its function is as follows. NDH-1 shuttles electrons from an unknown electron donor, via FMN and iron-sulfur (Fe-S) centers, to quinones in the respiratory and/or the photosynthetic chain. The immediate electron acceptor for the enzyme in this species is believed to be plastoquinone. Couples the redox reaction to proton translocation, and thus conserves the redox energy in a proton gradient. This Synechococcus sp. (strain JA-3-3Ab) (Cyanobacteria bacterium Yellowstone A-Prime) protein is NAD(P)H-quinone oxidoreductase subunit 1.